The chain runs to 101 residues: Ascorbate-specific PTS system EIIB component (101 aa).

Residues 3-96 (VRILAVCGNG…KLLEVIKAHF (94 aa)) enclose the PTS EIIB type-2 domain. Cys9 functions as the Phosphocysteine intermediate in the catalytic mechanism. Position 9 is a phosphocysteine (Cys9).

The protein localises to the cytoplasm. It catalyses the reaction N(pros)-phospho-L-histidyl-[protein] + L-ascorbate(out) = L-ascorbate 6-phosphate(in) + L-histidyl-[protein]. The phosphoenolpyruvate-dependent sugar phosphotransferase system (sugar PTS), a major carbohydrate active transport system, catalyzes the phosphorylation of incoming sugar substrates concomitantly with their translocation across the cell membrane. The enzyme II UlaABC PTS system is involved in ascorbate transport. The chain is Ascorbate-specific PTS system EIIB component (ulaB) from Escherichia coli O6:H1 (strain CFT073 / ATCC 700928 / UPEC).